A 356-amino-acid chain; its full sequence is Histidinol-phosphate aminotransferase 2 (356 aa).

Lysine 217 carries the N6-(pyridoxal phosphate)lysine modification.

It belongs to the class-II pyridoxal-phosphate-dependent aminotransferase family. Histidinol-phosphate aminotransferase subfamily. In terms of assembly, homodimer. Pyridoxal 5'-phosphate serves as cofactor.

It catalyses the reaction L-histidinol phosphate + 2-oxoglutarate = 3-(imidazol-4-yl)-2-oxopropyl phosphate + L-glutamate. It participates in amino-acid biosynthesis; L-histidine biosynthesis; L-histidine from 5-phospho-alpha-D-ribose 1-diphosphate: step 7/9. The chain is Histidinol-phosphate aminotransferase 2 from Burkholderia pseudomallei (strain 1710b).